We begin with the raw amino-acid sequence, 688 residues long: PTS system glucoside-specific EIICBA component (688 aa).

The PTS EIIC type-1 domain occupies 3 to 427 (KKLFGQLQRI…FKLKTPGRED (425 aa)). Helical transmembrane passes span 12 to 32 (IGKA…LLAF), 81 to 101 (LGLA…YLIM), 137 to 157 (LVLG…MGAL), 182 to 202 (FVPI…SFAW), 223 to 243 (LTTF…LHHI), 284 to 304 (AFTT…AFAI), 315 to 335 (VVGG…ITEP), 340 to 360 (FLFV…TSFL), 364 to 384 (LLGV…ILYG), and 395 to 415 (LVIP…DFAI). The PTS EIIB type-1 domain occupies 438–519 (AKLPFDVLDA…AKIMSGEITK (82 aa)). Cysteine 460 (phosphocysteine intermediate; for EIIB activity) is an active-site residue. The PTS EIIA type-1 domain maps to 560 to 664 (DQVFAGKMMG…SIVTPMIITN (105 aa)). Catalysis depends on histidine 612, which acts as the Tele-phosphohistidine intermediate; for EIIA activity.

It localises to the cell membrane. In terms of biological role, the phosphoenolpyruvate-dependent sugar phosphotransferase system (sugar PTS), a major carbohydrate active -transport system, catalyzes the phosphorylation of incoming sugar substrates concomitantly with their translocation across the cell membrane. This system is involved in alpha- and beta-glucoside transport. This chain is PTS system glucoside-specific EIICBA component (glcB), found in Staphylococcus aureus (strain JH1).